The chain runs to 374 residues: Alcohol dehydrogenase S chain (374 aa).

S2 carries the post-translational modification N-acetylserine. 7 residues coordinate Zn(2+): C47, H68, C98, C101, C104, C112, and C174. NAD(+) contacts are provided by residues 199-204 (GLGGVG), D223, K228, 292-294 (VGV), and R369.

This sequence belongs to the zinc-containing alcohol dehydrogenase family. Class-I subfamily. Dimer of identical or non-identical chains of two types (E and S) coded by 2 separate genes at different loci. Requires Zn(2+) as cofactor.

The protein localises to the cytoplasm. It carries out the reaction a primary alcohol + NAD(+) = an aldehyde + NADH + H(+). The enzyme catalyses a secondary alcohol + NAD(+) = a ketone + NADH + H(+). This Equus caballus (Horse) protein is Alcohol dehydrogenase S chain.